We begin with the raw amino-acid sequence, 181 residues long: MAIGLKEKYKTTVTQSLKDEFQYKNVHEVPRFTKITINRGLGEASQNAKALESSIQELTLITGQKPIVTKAKKSIAGFKIREEVPIGIVVHLRKDKMYSFLEKLINLTLPRIRDFRGISPRSFDGKGNYNLGLREQLIFPEIDYDNIDQIRGLDISIVTTAKTDQEGLALLKKLGMPFRES.

Belongs to the universal ribosomal protein uL5 family. As to quaternary structure, part of the 50S ribosomal subunit; contacts the 5S rRNA.

It is found in the plastid. It localises to the chloroplast. Binds 5S rRNA, forms part of the central protuberance of the 50S subunit. This chain is Large ribosomal subunit protein uL5c (rpl5), found in Pyropia yezoensis (Susabi-nori).